Consider the following 173-residue polypeptide: Ribosome maturation factor RimM (173 aa).

The region spanning 95–169 (EGSYYFKDIL…RIEVTLLEGL (75 aa)) is the PRC barrel domain.

It belongs to the RimM family. Binds ribosomal protein uS19.

It localises to the cytoplasm. In terms of biological role, an accessory protein needed during the final step in the assembly of 30S ribosomal subunit, possibly for assembly of the head region. Essential for efficient processing of 16S rRNA. May be needed both before and after RbfA during the maturation of 16S rRNA. It has affinity for free ribosomal 30S subunits but not for 70S ribosomes. The protein is Ribosome maturation factor RimM of Lactobacillus gasseri (strain ATCC 33323 / DSM 20243 / BCRC 14619 / CIP 102991 / JCM 1131 / KCTC 3163 / NCIMB 11718 / NCTC 13722 / AM63).